A 567-amino-acid polypeptide reads, in one-letter code: Proline--tRNA ligase (567 aa).

Belongs to the class-II aminoacyl-tRNA synthetase family. ProS type 1 subfamily. In terms of assembly, homodimer.

The protein localises to the cytoplasm. It catalyses the reaction tRNA(Pro) + L-proline + ATP = L-prolyl-tRNA(Pro) + AMP + diphosphate. In terms of biological role, catalyzes the attachment of proline to tRNA(Pro) in a two-step reaction: proline is first activated by ATP to form Pro-AMP and then transferred to the acceptor end of tRNA(Pro). As ProRS can inadvertently accommodate and process non-cognate amino acids such as alanine and cysteine, to avoid such errors it has two additional distinct editing activities against alanine. One activity is designated as 'pretransfer' editing and involves the tRNA(Pro)-independent hydrolysis of activated Ala-AMP. The other activity is designated 'posttransfer' editing and involves deacylation of mischarged Ala-tRNA(Pro). The misacylated Cys-tRNA(Pro) is not edited by ProRS. This is Proline--tRNA ligase from Fusobacterium nucleatum subsp. nucleatum (strain ATCC 25586 / DSM 15643 / BCRC 10681 / CIP 101130 / JCM 8532 / KCTC 2640 / LMG 13131 / VPI 4355).